A 288-amino-acid chain; its full sequence is Pantothenate synthetase (288 aa).

30–37 (MGFLHEGH) contacts ATP. Catalysis depends on H37, which acts as the Proton donor. Q61 provides a ligand contact to (R)-pantoate. Q61 lines the beta-alanine pocket. 147–150 (GMKD) is a binding site for ATP. Q153 serves as a coordination point for (R)-pantoate. 184–187 (KSSR) is a binding site for ATP.

It belongs to the pantothenate synthetase family. Homodimer.

The protein resides in the cytoplasm. The enzyme catalyses (R)-pantoate + beta-alanine + ATP = (R)-pantothenate + AMP + diphosphate + H(+). Its pathway is cofactor biosynthesis; (R)-pantothenate biosynthesis; (R)-pantothenate from (R)-pantoate and beta-alanine: step 1/1. Functionally, catalyzes the condensation of pantoate with beta-alanine in an ATP-dependent reaction via a pantoyl-adenylate intermediate. This is Pantothenate synthetase from Bacillus licheniformis (strain ATCC 14580 / DSM 13 / JCM 2505 / CCUG 7422 / NBRC 12200 / NCIMB 9375 / NCTC 10341 / NRRL NRS-1264 / Gibson 46).